The chain runs to 207 residues: Probable nicotinate-nucleotide adenylyltransferase (207 aa).

It belongs to the NadD family.

It catalyses the reaction nicotinate beta-D-ribonucleotide + ATP + H(+) = deamido-NAD(+) + diphosphate. Its pathway is cofactor biosynthesis; NAD(+) biosynthesis; deamido-NAD(+) from nicotinate D-ribonucleotide: step 1/1. Functionally, catalyzes the reversible adenylation of nicotinate mononucleotide (NaMN) to nicotinic acid adenine dinucleotide (NaAD). This is Probable nicotinate-nucleotide adenylyltransferase from Desulfitobacterium hafniense (strain DSM 10664 / DCB-2).